The following is a 141-amino-acid chain: MRVVLQRVSRARVLVDGQVVGEVSGEGLVAFVGVTPGDGAGEVALLARKIAELRVLRDERSVLDAGAGVLVVSQFTLYADTRKGRRPTWSAAAPRPVAEPVVDALVEALRERGVVVATGVFGADMAVELTNDGPVTILLEA.

The Gly-cisPro motif, important for rejection of L-amino acids signature appears at 133 to 134 (GP).

Belongs to the DTD family. In terms of assembly, homodimer.

Its subcellular location is the cytoplasm. It catalyses the reaction glycyl-tRNA(Ala) + H2O = tRNA(Ala) + glycine + H(+). It carries out the reaction a D-aminoacyl-tRNA + H2O = a tRNA + a D-alpha-amino acid + H(+). Functionally, an aminoacyl-tRNA editing enzyme that deacylates mischarged D-aminoacyl-tRNAs. Also deacylates mischarged glycyl-tRNA(Ala), protecting cells against glycine mischarging by AlaRS. Acts via tRNA-based rather than protein-based catalysis; rejects L-amino acids rather than detecting D-amino acids in the active site. By recycling D-aminoacyl-tRNA to D-amino acids and free tRNA molecules, this enzyme counteracts the toxicity associated with the formation of D-aminoacyl-tRNA entities in vivo and helps enforce protein L-homochirality. The protein is D-aminoacyl-tRNA deacylase of Beutenbergia cavernae (strain ATCC BAA-8 / DSM 12333 / CCUG 43141 / JCM 11478 / NBRC 16432 / NCIMB 13614 / HKI 0122).